The chain runs to 102 residues: Urease subunit beta (102 aa).

The protein belongs to the urease beta subunit family. In terms of assembly, heterotrimer of UreA (gamma), UreB (beta) and UreC (alpha) subunits. Three heterotrimers associate to form the active enzyme.

It localises to the cytoplasm. The catalysed reaction is urea + 2 H2O + H(+) = hydrogencarbonate + 2 NH4(+). Its pathway is nitrogen metabolism; urea degradation; CO(2) and NH(3) from urea (urease route): step 1/1. This Clostridium perfringens protein is Urease subunit beta.